The chain runs to 579 residues: Basic helix-loop-helix ARNT-like protein 2 (579 aa).

The segment at Met-1–Lys-198 is interaction with PER2. The short motif at Pro-4–Gly-9 is the Nuclear localization signal element. The segment at Arg-40–Arg-61 is disordered. A bHLH domain is found at Gly-48 to Leu-101. Residues Arg-50–Arg-59 are compositionally biased toward basic and acidic residues. Positions Ile-118–Leu-128 match the Nuclear export signal 1 motif. The PAS 1 domain occupies Gln-119–Pro-190. A compositionally biased stretch (basic and acidic residues) spans Cys-186–Asp-196. Positions Cys-186–Met-213 are disordered. Residue Lys-226 forms a Glycyl lysine isopeptide (Lys-Gly) (interchain with G-Cter in SUMO2 and SUMO3) linkage. Residue Lys-233 forms a Glycyl lysine isopeptide (Lys-Gly) (interchain with G-Cter in SUMO2) linkage. The 71-residue stretch at Val-296 to Lys-366 folds into the PAS 2 domain. The Nuclear export signal 2 motif lies at Leu-331–Leu-339. The PAC domain maps to Thr-371–Arg-414. Residues Arg-469–Asp-536 are disordered.

Component of the circadian core oscillator, which includes the CRY proteins, CLOCK, or NPAS2, BMAL1 or BMAL2, CSNK1D and/or CSNK1E, TIMELESS and the PER proteins. Interacts directly with CLOCK to form the BMAL2-CLOCK transactivator. Can form heterodimers or homodimers which interact directly with CLOCK to form the transcription activator. Interacts with NPAS2 and HIF1A. Interacts with PER2. In terms of tissue distribution, expressed in the suprachiasmatic nucleus (SCN).

It localises to the nucleus. Functionally, transcriptional activator which forms a core component of the circadian clock. The circadian clock, an internal time-keeping system, regulates various physiological processes through the generation of approximately 24 hour circadian rhythms in gene expression, which are translated into rhythms in metabolism and behavior. It is derived from the Latin roots 'circa' (about) and 'diem' (day) and acts as an important regulator of a wide array of physiological functions including metabolism, sleep, body temperature, blood pressure, endocrine, immune, cardiovascular, and renal function. Consists of two major components: the central clock, residing in the suprachiasmatic nucleus (SCN) of the brain, and the peripheral clocks that are present in nearly every tissue and organ system. Both the central and peripheral clocks can be reset by environmental cues, also known as Zeitgebers (German for 'timegivers'). The predominant Zeitgeber for the central clock is light, which is sensed by retina and signals directly to the SCN. The central clock entrains the peripheral clocks through neuronal and hormonal signals, body temperature and feeding-related cues, aligning all clocks with the external light/dark cycle. Circadian rhythms allow an organism to achieve temporal homeostasis with its environment at the molecular level by regulating gene expression to create a peak of protein expression once every 24 hours to control when a particular physiological process is most active with respect to the solar day. Transcription and translation of core clock components (CLOCK, NPAS2, BMAL1, BMAL2, PER1, PER2, PER3, CRY1 and CRY2) plays a critical role in rhythm generation, whereas delays imposed by post-translational modifications (PTMs) are important for determining the period (tau) of the rhythms (tau refers to the period of a rhythm and is the length, in time, of one complete cycle). A diurnal rhythm is synchronized with the day/night cycle, while the ultradian and infradian rhythms have a period shorter and longer than 24 hours, respectively. Disruptions in the circadian rhythms contribute to the pathology of cardiovascular diseases, cancer, metabolic syndromes and aging. A transcription/translation feedback loop (TTFL) forms the core of the molecular circadian clock mechanism. Transcription factors, CLOCK or NPAS2 and BMAL1 or BMAL2, form the positive limb of the feedback loop, act in the form of a heterodimer and activate the transcription of core clock genes and clock-controlled genes (involved in key metabolic processes), harboring E-box elements (5'-CACGTG-3') within their promoters. The core clock genes: PER1/2/3 and CRY1/2 which are transcriptional repressors form the negative limb of the feedback loop and interact with the CLOCK|NPAS2-BMAL1|BMAL2 heterodimer inhibiting its activity and thereby negatively regulating their own expression. This heterodimer also activates nuclear receptors NR1D1/2 and RORA/B/G, which form a second feedback loop and which activate and repress BMAL1 transcription, respectively. The CLOCK-BMAL2 heterodimer activates the transcription of SERPINE1/PAI1 and BHLHE40/DEC1. This is Basic helix-loop-helix ARNT-like protein 2 (Bmal2) from Mus musculus (Mouse).